Here is a 590-residue protein sequence, read N- to C-terminus: L-fucose isomerase (590 aa).

Catalysis depends on proton acceptor residues E337 and D361. Residues E337, D361, and H528 each coordinate Mn(2+).

It belongs to the L-fucose isomerase family. Mn(2+) serves as cofactor.

The protein localises to the cytoplasm. The enzyme catalyses L-fucose = L-fuculose. Its pathway is carbohydrate degradation; L-fucose degradation; L-lactaldehyde and glycerone phosphate from L-fucose: step 1/3. Functionally, converts the aldose L-fucose into the corresponding ketose L-fuculose. This is L-fucose isomerase from Bacteroides fragilis (strain YCH46).